The primary structure comprises 490 residues: UDP-N-acetylmuramoylalanine--D-glutamate ligase (490 aa).

124–130 (GTNGKTT) serves as a coordination point for ATP.

Belongs to the MurCDEF family.

Its subcellular location is the cytoplasm. The catalysed reaction is UDP-N-acetyl-alpha-D-muramoyl-L-alanine + D-glutamate + ATP = UDP-N-acetyl-alpha-D-muramoyl-L-alanyl-D-glutamate + ADP + phosphate + H(+). It functions in the pathway cell wall biogenesis; peptidoglycan biosynthesis. In terms of biological role, cell wall formation. Catalyzes the addition of glutamate to the nucleotide precursor UDP-N-acetylmuramoyl-L-alanine (UMA). This chain is UDP-N-acetylmuramoylalanine--D-glutamate ligase (murD), found in Mycobacterium leprae (strain TN).